The sequence spans 107 residues: Ribonuclease P protein subunit rpr2 (107 aa).

The Zn(2+) site is built by Cys59, Cys62, Cys93, and Cys96.

Belongs to the eukaryotic/archaeal RNase P protein component 4 family. The cofactor is Zn(2+).

The protein localises to the cytoplasm. The protein resides in the nucleus. The catalysed reaction is Endonucleolytic cleavage of RNA, removing 5'-extranucleotides from tRNA precursor.. Functionally, component of ribonuclease P, a protein complex that generates mature tRNA molecules by cleaving their 5'-ends. The protein is Ribonuclease P protein subunit rpr2 (rpr2) of Schizosaccharomyces pombe (strain 972 / ATCC 24843) (Fission yeast).